The following is a 451-amino-acid chain: Phosphoglucosamine mutase (451 aa).

Serine 104 serves as the catalytic Phosphoserine intermediate. Mg(2+) is bound by residues serine 104, aspartate 242, aspartate 244, and aspartate 246. Serine 104 bears the Phosphoserine mark.

The protein belongs to the phosphohexose mutase family. Mg(2+) is required as a cofactor. Post-translationally, activated by phosphorylation.

The catalysed reaction is alpha-D-glucosamine 1-phosphate = D-glucosamine 6-phosphate. Functionally, catalyzes the conversion of glucosamine-6-phosphate to glucosamine-1-phosphate. The polypeptide is Phosphoglucosamine mutase (Kocuria rhizophila (strain ATCC 9341 / DSM 348 / NBRC 103217 / DC2201)).